The following is a 171-amino-acid chain: Ribosome maturation factor RimM (171 aa).

Residues 96 to 169 (EGEFFIADMI…KMIIDPIKGM (74 aa)) enclose the PRC barrel domain.

It belongs to the RimM family. As to quaternary structure, binds ribosomal protein uS19.

The protein resides in the cytoplasm. In terms of biological role, an accessory protein needed during the final step in the assembly of 30S ribosomal subunit, possibly for assembly of the head region. Essential for efficient processing of 16S rRNA. May be needed both before and after RbfA during the maturation of 16S rRNA. It has affinity for free ribosomal 30S subunits but not for 70S ribosomes. This is Ribosome maturation factor RimM from Clostridioides difficile (strain 630) (Peptoclostridium difficile).